The following is a 318-amino-acid chain: Aldo-keto reductase family 1 member C21 (318 aa).

Position 20 to 24 (glycine 20 to alanine 24) interacts with NADP(+). Substrate is bound at residue lysine 31. An NADP(+)-binding site is contributed by aspartate 50. Catalysis depends on tyrosine 55, which acts as the Proton donor. Histidine 117 provides a ligand contact to substrate. NADP(+) is bound by residues serine 166 to asparagine 167, glutamine 190, tyrosine 216 to tyrosine 224, and threonine 270 to asparagine 280.

This sequence belongs to the aldo/keto reductase family. As to quaternary structure, monomer.

It is found in the cytoplasm. It carries out the reaction androsterone + NADP(+) = 5alpha-androstan-3,17-dione + NADPH + H(+). The catalysed reaction is androsterone + NAD(+) = 5alpha-androstan-3,17-dione + NADH + H(+). NADP-dependent 17-alpha-hydroxysteroid dehydrogenase that converts 5-alpha-androstane-3,17-dione into androsterone. Has lower 3-alpha-hydroxysteroid dehydrogenase activity. Has broad substrate specificity and acts on various 17-alpha-hydroxysteroids, 17-ketosteroids, 3-alpha hydroxysteroids and 3-ketosteroids. Reduction of keto groups is strictly stereoselective. Reduction of 17-ketosteroids yields only 17-alpha-hydroxysteroids. Likewise, reduction of 3-ketosteroids yields only 3-alpha-hydroxysteroids. The polypeptide is Aldo-keto reductase family 1 member C21 (Akr1c21) (Rattus norvegicus (Rat)).